The following is a 413-amino-acid chain: Histidine--tRNA ligase (413 aa).

It belongs to the class-II aminoacyl-tRNA synthetase family.

Its subcellular location is the cytoplasm. It catalyses the reaction tRNA(His) + L-histidine + ATP = L-histidyl-tRNA(His) + AMP + diphosphate + H(+). This chain is Histidine--tRNA ligase, found in Methanosarcina acetivorans (strain ATCC 35395 / DSM 2834 / JCM 12185 / C2A).